Here is a 317-residue protein sequence, read N- to C-terminus: 4-diphosphocytidyl-2-C-methyl-D-erythritol kinase (317 aa).

K17 is a catalytic residue. 109 to 119 contributes to the ATP binding site; sequence PVAGGMGGGSA. The active site involves D151.

The protein belongs to the GHMP kinase family. IspE subfamily.

The catalysed reaction is 4-CDP-2-C-methyl-D-erythritol + ATP = 4-CDP-2-C-methyl-D-erythritol 2-phosphate + ADP + H(+). It functions in the pathway isoprenoid biosynthesis; isopentenyl diphosphate biosynthesis via DXP pathway; isopentenyl diphosphate from 1-deoxy-D-xylulose 5-phosphate: step 3/6. Its function is as follows. Catalyzes the phosphorylation of the position 2 hydroxy group of 4-diphosphocytidyl-2C-methyl-D-erythritol. This is 4-diphosphocytidyl-2-C-methyl-D-erythritol kinase from Paenarthrobacter aurescens (strain TC1).